Reading from the N-terminus, the 59-residue chain is Large ribosomal subunit protein uL30 (59 aa).

It belongs to the universal ribosomal protein uL30 family. Part of the 50S ribosomal subunit.

This chain is Large ribosomal subunit protein uL30, found in Persephonella marina (strain DSM 14350 / EX-H1).